We begin with the raw amino-acid sequence, 240 residues long: 3-deoxy-D-manno-octulosonic acid kinase (240 aa).

The active site involves Asp170.

Belongs to the protein kinase superfamily. KdkA/RfaP family.

It localises to the cell inner membrane. The enzyme catalyses an alpha-Kdo-(2-&gt;6)-lipid IVA + ATP = a 4-O-phospho-alpha-Kdo-(2-&gt;6)-lipid IVA + ADP + H(+). It functions in the pathway bacterial outer membrane biogenesis; LPS core biosynthesis. Catalyzes the ATP-dependent phosphorylation of the 3-deoxy-D-manno-octulosonic acid (Kdo) residue in Kdo-lipid IV(A) at the 4-OH position. This Actinobacillus succinogenes (strain ATCC 55618 / DSM 22257 / CCUG 43843 / 130Z) protein is 3-deoxy-D-manno-octulosonic acid kinase.